A 187-amino-acid polypeptide reads, in one-letter code: Large ribosomal subunit protein uL24c (187 aa).

The N-terminal 41 residues, 1 to 41 (MAALQSSFAGLSTSFFGQRFSPPLSLPPLVKSTEGPCLIQA), are a transit peptide targeting the chloroplast.

It belongs to the universal ribosomal protein uL24 family. As to quaternary structure, part of the 50S ribosomal subunit.

Its subcellular location is the plastid. It is found in the chloroplast. Its function is as follows. One of two assembly initiator proteins, it binds directly to the 5'-end of the 23S rRNA, where it nucleates assembly of the 50S subunit. This Nicotiana tabacum (Common tobacco) protein is Large ribosomal subunit protein uL24c (RPL24).